The sequence spans 311 residues: Porphobilinogen deaminase (311 aa).

Residue Cys245 is modified to S-(dipyrrolylmethanemethyl)cysteine.

This sequence belongs to the HMBS family. As to quaternary structure, monomer. The cofactor is dipyrromethane.

The enzyme catalyses 4 porphobilinogen + H2O = hydroxymethylbilane + 4 NH4(+). It participates in porphyrin-containing compound metabolism; protoporphyrin-IX biosynthesis; coproporphyrinogen-III from 5-aminolevulinate: step 2/4. In terms of biological role, tetrapolymerization of the monopyrrole PBG into the hydroxymethylbilane pre-uroporphyrinogen in several discrete steps. This is Porphobilinogen deaminase from Acinetobacter baylyi (strain ATCC 33305 / BD413 / ADP1).